A 95-amino-acid polypeptide reads, in one-letter code: Aspartyl/glutamyl-tRNA(Asn/Gln) amidotransferase subunit C (95 aa).

Belongs to the GatC family. In terms of assembly, heterotrimer of A, B and C subunits.

The catalysed reaction is L-glutamyl-tRNA(Gln) + L-glutamine + ATP + H2O = L-glutaminyl-tRNA(Gln) + L-glutamate + ADP + phosphate + H(+). It carries out the reaction L-aspartyl-tRNA(Asn) + L-glutamine + ATP + H2O = L-asparaginyl-tRNA(Asn) + L-glutamate + ADP + phosphate + 2 H(+). Allows the formation of correctly charged Asn-tRNA(Asn) or Gln-tRNA(Gln) through the transamidation of misacylated Asp-tRNA(Asn) or Glu-tRNA(Gln) in organisms which lack either or both of asparaginyl-tRNA or glutaminyl-tRNA synthetases. The reaction takes place in the presence of glutamine and ATP through an activated phospho-Asp-tRNA(Asn) or phospho-Glu-tRNA(Gln). The sequence is that of Aspartyl/glutamyl-tRNA(Asn/Gln) amidotransferase subunit C from Nitratidesulfovibrio vulgaris (strain DSM 19637 / Miyazaki F) (Desulfovibrio vulgaris).